Consider the following 651-residue polypeptide: Threonine--tRNA ligase (651 aa).

A TGS domain is found at 1–64 (MSSVVHVTLP…EKDCTLQVLT (64 aa)). The catalytic stretch occupies residues 245–535 (DHRRLGPELG…LTEHYAGNFP (291 aa)). Residues C336, H387, and H512 each contribute to the Zn(2+) site.

Belongs to the class-II aminoacyl-tRNA synthetase family. As to quaternary structure, homodimer. Zn(2+) is required as a cofactor.

The protein resides in the cytoplasm. The enzyme catalyses tRNA(Thr) + L-threonine + ATP = L-threonyl-tRNA(Thr) + AMP + diphosphate + H(+). In terms of biological role, catalyzes the attachment of threonine to tRNA(Thr) in a two-step reaction: L-threonine is first activated by ATP to form Thr-AMP and then transferred to the acceptor end of tRNA(Thr). Also edits incorrectly charged L-seryl-tRNA(Thr). This chain is Threonine--tRNA ligase, found in Symbiobacterium thermophilum (strain DSM 24528 / JCM 14929 / IAM 14863 / T).